Consider the following 51-residue polypeptide: Large ribosomal subunit protein bL33 (51 aa).

This sequence belongs to the bacterial ribosomal protein bL33 family.

This is Large ribosomal subunit protein bL33 from Psychrobacter arcticus (strain DSM 17307 / VKM B-2377 / 273-4).